Here is a 947-residue protein sequence, read N- to C-terminus: Ionotropic receptor 25a (947 aa).

The first 30 residues, 1–30, serve as a signal peptide directing secretion; that stretch reads MILMNPKTSKILWLLGFLSLLSSFSLEIAA. Over 31–562 the chain is Extracellular; the sequence is QTTQNINVLF…SLFKFLTVLE (532 aa). N-linked (GlcNAc...) asparagine glycans are attached at residues Asn78, Asn177, Asn277, and Asn434. Residues 563-583 form a helical membrane-spanning segment; the sequence is TNVWLCILAAYFFTSFLMWIF. The Cytoplasmic portion of the chain corresponds to 584–641; that stretch reads DRWSPYSYQNNREKYKDDEEKREFNLKECLWFCMTSLTPQGGGEAPKNLSGRLVAATW. The helical transmembrane segment at 642-662 threads the bilayer; the sequence is WLFGFIIIASYTANLAAFLTV. The Extracellular segment spans residues 663-858; the sequence is SRLDTPVESL…DQSDGISIQN (196 aa). Asn687, Asn715, and Asn762 each carry an N-linked (GlcNAc...) asparagine glycan. Residues 859-879 traverse the membrane as a helical segment; it reads IGGVFIVIFVGIGMACITLVF. Topologically, residues 880–947 are cytoplasmic; sequence EYWWYRYRKN…QYPATFKPRF (68 aa).

Belongs to the glutamate-gated ion channel (TC 1.A.10.1) family. Interacts with nocte. In terms of tissue distribution, in the antenna, detected in neurons of the arista and also detected in sacculus neurons which innervate the first and second chambers (at protein level). Throughout the main body of the antenna, expressed in neurons which innervate the coeloconic class of olfactory sensilla (at protein level). Expressed in multiple cells of the dorsal organ including the dorsal organ cool cells (at protein level). Detected in femur and retina. Expressed in a subset of femur chordonotal neurons and antennal Johnston's Organ neurons.

It localises to the cell membrane. It is found in the cell projection. Its subcellular location is the axon. The protein resides in the dendrite. The protein localises to the perikaryon. It localises to the cilium. Its function is as follows. Integral part of various neural sensory systems in the antenna that provide the neural basis for the response to environmental changes in temperature (thermosensation), humidity (hygrosensation) and odor detection. Required for odor-evoked electrophysiological responses in multiple neuron classes in the antenna and is likely to function as part of an olfactory receptor complex with Ir76a and Ir76b. Together with Ir21a and Ir93a, mediates the response of the larval dorsal organ cool cells, a trio of cool-responsive neurons, to cooling and is required for cool avoidance behavior. Required in chordonotal organ neurons for behavioral synchronization to low-amplitude temperature cycles and mediates circadian clock resetting by temperature. Together with Ir40a and Ir93a, mediates the response of the hydrosensory sacculus neurons to changes in relative humidity, and is required for dry detection and humidiy preference behavior. The protein is Ionotropic receptor 25a of Drosophila melanogaster (Fruit fly).